The chain runs to 514 residues: Bifunctional purine biosynthesis protein PurH (514 aa).

Residues 1-145 enclose the MGS-like domain; it reads MIKRALISVS…KNYQDVVVIV (145 aa).

This sequence belongs to the PurH family.

It catalyses the reaction (6R)-10-formyltetrahydrofolate + 5-amino-1-(5-phospho-beta-D-ribosyl)imidazole-4-carboxamide = 5-formamido-1-(5-phospho-D-ribosyl)imidazole-4-carboxamide + (6S)-5,6,7,8-tetrahydrofolate. The catalysed reaction is IMP + H2O = 5-formamido-1-(5-phospho-D-ribosyl)imidazole-4-carboxamide. It functions in the pathway purine metabolism; IMP biosynthesis via de novo pathway; 5-formamido-1-(5-phospho-D-ribosyl)imidazole-4-carboxamide from 5-amino-1-(5-phospho-D-ribosyl)imidazole-4-carboxamide (10-formyl THF route): step 1/1. It participates in purine metabolism; IMP biosynthesis via de novo pathway; IMP from 5-formamido-1-(5-phospho-D-ribosyl)imidazole-4-carboxamide: step 1/1. The sequence is that of Bifunctional purine biosynthesis protein PurH from Acetivibrio thermocellus (strain ATCC 27405 / DSM 1237 / JCM 9322 / NBRC 103400 / NCIMB 10682 / NRRL B-4536 / VPI 7372) (Clostridium thermocellum).